We begin with the raw amino-acid sequence, 205 residues long: Regulator of G-protein signaling 4 (205 aa).

3 S-palmitoyl cysteine lipidation sites follow: Cys-2, Cys-12, and Cys-95. In terms of domain architecture, RGS spans 62 to 178 (SLENLISHEC…LKSRFYLDLV (117 aa)).

Post-translationally, palmitoylated on Cys-2 and/or Cys-12. Phosphorylated by cyclic GMP-dependent protein kinase. Expressed in brain and heart. Expressed in brain at protein level. Expressed in prefontal and visual cortex. Isoform 4 and isoform 5 are expressed ubiquitously. Isoform 1, isoform 2 and isoform 3 are not expressed in the cerebellum.

Its function is as follows. Inhibits signal transduction by increasing the GTPase activity of G protein alpha subunits thereby driving them into their inactive GDP-bound form. Activity on G(z)-alpha is inhibited by phosphorylation of the G-protein. Activity on G(z)-alpha and G(i)-alpha-1 is inhibited by palmitoylation of the G-protein. This Homo sapiens (Human) protein is Regulator of G-protein signaling 4 (RGS4).